The chain runs to 280 residues: Phosphate import ATP-binding protein PstB (280 aa).

One can recognise an ABC transporter domain in the interval 34-275 (IEVKNLNFFY…PARKETEDYI (242 aa)). Residue 66 to 73 (GPSGCGKS) participates in ATP binding.

This sequence belongs to the ABC transporter superfamily. Phosphate importer (TC 3.A.1.7) family. As to quaternary structure, the complex is composed of two ATP-binding proteins (PstB), two transmembrane proteins (PstC and PstA) and a solute-binding protein (PstS).

It is found in the cell inner membrane. It carries out the reaction phosphate(out) + ATP + H2O = ADP + 2 phosphate(in) + H(+). Functionally, part of the ABC transporter complex PstSACB involved in phosphate import. Responsible for energy coupling to the transport system. This chain is Phosphate import ATP-binding protein PstB, found in Burkholderia mallei (strain ATCC 23344).